The primary structure comprises 1218 residues: Coatomer subunit alpha-3 (1218 aa).

WD repeat units follow at residues 7-48 (TKSN…DRFD), 49-88 (EHDG…CLFT), 91-132 (GHLD…AVLT), 133-172 (GHNH…KKTV), 202-241 (GHDR…AWEV), 246-285 (GHMN…GIQT), 288-326 (REHD…PAFS), 363-404 (SLNQ…AGRT), and 450-489 (PLPI…GELQ). Positions 854–893 (AMANGGDGFDAEEGEANEEDGEEGGWDLEDLELPPEAETP) are disordered. Residues 862-888 (FDAEEGEANEEDGEEGGWDLEDLELPP) are compositionally biased toward acidic residues.

As to quaternary structure, oligomeric complex that consists of at least the alpha, beta, beta', gamma, delta, epsilon and zeta subunits.

It is found in the cytoplasm. It localises to the golgi apparatus membrane. The protein resides in the cytoplasmic vesicle. The protein localises to the COPI-coated vesicle membrane. Functionally, the coatomer is a cytosolic protein complex that binds to dilysine motifs and reversibly associates with Golgi non-clathrin-coated vesicles, which further mediate biosynthetic protein transport from the ER, via the Golgi up to the trans Golgi network. Coatomer complex is required for budding from Golgi membranes, and is essential for the retrograde Golgi-to-ER transport of dilysine-tagged proteins. In Oryza sativa subsp. japonica (Rice), this protein is Coatomer subunit alpha-3.